The primary structure comprises 596 residues: Two-component response regulator ARR12 (596 aa).

Positions 18-133 constitute a Response regulatory domain; that stretch reads RVLAVDDDQT…ELKNIWQHVV (116 aa). Position 69 is a 4-aspartylphosphate (Asp-69). A compositionally biased stretch (basic and acidic residues) spans 138–153; the sequence is DKNRGSNNNGDKRDGS. Positions 138 to 192 are disordered; it reads DKNRGSNNNGDKRDGSGNEGVGNSDQNNGKGNRKRKDQYNEDEDEDRDDNDDSCA. Residues 158–167 are compositionally biased toward polar residues; that stretch reads VGNSDQNNGK. The span at 177 to 189 shows a compositional bias: acidic residues; it reads NEDEDEDRDDNDD. The Nuclear localization signal signature appears at 194–197; that stretch reads KKQR. Positions 197–247 form a DNA-binding region, myb-like GARP; the sequence is RVVWTVELHKKFVAAVNQLGYEKAMPKKILDLMNVEKLTRENVASHLQKFR. The tract at residues 437 to 467 is disordered; that stretch reads NAVSSSTHPPPPAHNSNSINHQFDVSPLPHS. Polar residues predominate over residues 450–459; that stretch reads HNSNSINHQF.

This sequence belongs to the ARR family. Type-B subfamily. Binds the target DNA as a monomer. Two-component system major event consists of a His-to-Asp phosphorelay between a sensor histidine kinase (HK) and a response regulator (RR). In plants, the His-to-Asp phosphorelay involves an additional intermediate named Histidine-containing phosphotransfer protein (HPt). This multistep phosphorelay consists of a His-Asp-His-Asp sequential transfer of a phosphate group between first a His and an Asp of the HK protein, followed by the transfer to a conserved His of the HPt protein and finally the transfer to an Asp in the receiver domain of the RR protein. Detected in the whole plant. Predominantly expressed in leaves. Expressed at the root transition zone.

The protein resides in the nucleus. Transcriptional activator that binds specifically to the DNA sequence 5'-[AG]GATT-3'. Functions as a response regulator involved in His-to-Asp phosphorelay signal transduction system. Phosphorylation of the Asp residue in the receiver domain activates the ability of the protein to promote the transcription of target genes. Could directly activate some type-A response regulators in response to cytokinins. Involved in the root-meristem size determination through the regulation of cell differentiation. Involved in activating SHY2 during meristem growth and controls PIN expression via activation of SHY2. This Arabidopsis thaliana (Mouse-ear cress) protein is Two-component response regulator ARR12 (ARR12).